We begin with the raw amino-acid sequence, 1016 residues long: DENN domain-containing protein 1A (1016 aa).

Residues 13 to 145 form the uDENN domain; sequence FEVYVEVAYP…HRLPIPDPGV (133 aa). A cDENN domain is found at 162–298; sequence ELPSIPENRN…VISSLKNRLK (137 aa). In terms of domain architecture, dDENN spans 300 to 378; the sequence is VSTTTGDGVA…DGRLDLLNSG (79 aa). The FXDXF motif signature appears at 381–385; that stretch reads FSDVF. A disordered region spans residues 453–565; it reads DITENGCVSS…GPTPAPPDRA (113 aa). S473 bears the Phosphoserine mark. Basic and acidic residues predominate over residues 479–489; the sequence is QDPRLREDRRP. Over residues 500–509 the composition is skewed to basic residues; that stretch reads PRPHVVRRPK. T519 carries the post-translational modification Phosphothreonine. A phosphoserine mark is found at S520, S522, S523, S536, S538, and S546. Positions 569–578 match the Clathrin box motif; sequence DLLEDVFSSL. S592 is subject to Phosphoserine. The interval 681-737 is disordered; sequence LSPSIKEETPIPTPGSITIPRPQGRKTPELGIVPPPPTARPAKLQAAGGPLGDFSSE. S750 carries the phosphoserine modification. The residue at position 760 (R760) is an Omega-N-methylarginine. 2 disordered regions span residues 763-783 and 935-1016; these read PQGP…AGTG and SARA…ETFE. Residues 954 to 970 show a composition bias toward pro residues; it reads LLPPRPPQSLQPTPQPS. Composition is skewed to basic and acidic residues over residues 977–988 and 1007–1016; these read DPFEDLLRKTKQ and QLRRQWETFE.

In terms of assembly, interacts with RAB35. Interacts with clathrin and with the adapter protein complex 2, AP-2. Interacts with ITSN1 and SH3GL2. Interacts (when phosphorylated) with YWHAE. In terms of processing, phosphorylated on serine and/or threonine in an Akt-dependent manner. Phosphorylation probably regulates the guanine nucleotide exchange factor (GEF) activity, possibly by disrupting an intramolecular interaction between the DENN domain and the C-terminus of the protein, thereby relieving the autoinhibition.

It localises to the cytoplasmic vesicle. Its subcellular location is the clathrin-coated vesicle membrane. It is found in the presynaptic cell membrane. The guanine nucleotide exchange factor (GEF) activity is autoinhibited. Autoinhibition may be the result of intramolecular interaction between the DENN domain and the C-terminus, which is disrupted upon phosphorylation. Activation is regulated by Akt activation. Its function is as follows. Guanine nucleotide exchange factor (GEF) regulating clathrin-mediated endocytosis through RAB35 activation. Promotes the exchange of GDP to GTP, converting inactive GDP-bound RAB35 into its active GTP-bound form. Regulates clathrin-mediated endocytosis of synaptic vesicles and mediates exit from early endosomes. Binds phosphatidylinositol-phosphates (PtdInsPs), with some preference for PtdIns(3)P. The chain is DENN domain-containing protein 1A (Dennd1a) from Mus musculus (Mouse).